Reading from the N-terminus, the 700-residue chain is MNDKFFIDKTKEILKTYNLSPDKHPPKLSKEEAIKIINTLRELINYHDYRYYVLNQPVISDAEYDAIYKFLKSIEDNYPDLITPDSLTQRVSSDISSTFPQVKHLAPMLSLDNTYNEDDLRDFDRRVKELSGKEHIEYCVEPKYDGAGISLLYENDLFVRGATRGDGEVGEDVTKNLKTIKTIPLRANFSKQGIRLLEIRGEVIINKDDFKKINEERMAENLPPYANPRNLAAGSIRLQDPQEVVKRPLTALVYQITYVEPTNNMPKTHYGAIKMLHDLGFKTPFLDMKLCKNIQEVIDYCRYFESKRESLPYEIDGMVIKVNDISLYDELGFTSHAPRWATAFKFKAKQATTIILDVIFSVGRVGNITPVAKLEPVSLGGVTISSVSLFNEDFIREKDIHIKDTVIIERAGEVIPYVVSVVKEARPKDAKPIVFPKYCPSCGSKLVKAPGEVAWRCINISCPAQVVLRIRHFASKDAMDIKGLGEAVAQLLYDAKLVKNIADIYYLKFSDLVRLPRFAKKSAQNLIDAIEASKRRGLARVLYGLGIRYVGLTTAKKLASYYKDIWNIVKASEEDLRNIEDIGDIVARSIKEFFGLEQNINTIKRLEEAGVLLKEVSEAVSNKLAGLQFVFTGTLSCCTREVARQMVESLGATTSDSVTHHTSYLVVGQDPGATKLRKANMLGIKTISEEEFLRLLEDSK.

Residues 61-65, 110-111, and glutamate 141 each bind NAD(+); these read DAEYD and SL. Lysine 143 functions as the N6-AMP-lysine intermediate in the catalytic mechanism. The NAD(+) site is built by arginine 164, glutamate 202, lysine 321, and lysine 345. 4 residues coordinate Zn(2+): cysteine 439, cysteine 442, cysteine 457, and cysteine 462. The BRCT domain occupies 619–700; sequence AVSNKLAGLQ…EFLRLLEDSK (82 aa).

This sequence belongs to the NAD-dependent DNA ligase family. LigA subfamily. It depends on Mg(2+) as a cofactor. Requires Mn(2+) as cofactor.

It carries out the reaction NAD(+) + (deoxyribonucleotide)n-3'-hydroxyl + 5'-phospho-(deoxyribonucleotide)m = (deoxyribonucleotide)n+m + AMP + beta-nicotinamide D-nucleotide.. DNA ligase that catalyzes the formation of phosphodiester linkages between 5'-phosphoryl and 3'-hydroxyl groups in double-stranded DNA using NAD as a coenzyme and as the energy source for the reaction. It is essential for DNA replication and repair of damaged DNA. This Hydrogenobaculum sp. (strain Y04AAS1) protein is DNA ligase.